A 908-amino-acid polypeptide reads, in one-letter code: Bifunctional uridylyltransferase/uridylyl-removing enzyme (908 aa).

The interval 1-360 is uridylyltransferase; that stretch reads MFDTPAVFAR…LERIFRRRRR (360 aa). Residues 361–718 form a uridylyl-removing region; sequence IKQGYKVVRG…LDPDEDRDAT (358 aa). The 123-residue stretch at 477 to 599 folds into the HD domain; that stretch reads VDEHTIQTIV…VQTTKRLDLL (123 aa). 2 ACT domains span residues 719 to 801 and 829 to 904; these read RACF…LKSR and IIEV…GAER.

It belongs to the GlnD family. It depends on Mg(2+) as a cofactor.

The catalysed reaction is [protein-PII]-L-tyrosine + UTP = [protein-PII]-uridylyl-L-tyrosine + diphosphate. The enzyme catalyses [protein-PII]-uridylyl-L-tyrosine + H2O = [protein-PII]-L-tyrosine + UMP + H(+). With respect to regulation, uridylyltransferase (UTase) activity is inhibited by glutamine, while glutamine activates uridylyl-removing (UR) activity. Modifies, by uridylylation and deuridylylation, the PII regulatory proteins (GlnB and homologs), in response to the nitrogen status of the cell that GlnD senses through the glutamine level. Under low glutamine levels, catalyzes the conversion of the PII proteins and UTP to PII-UMP and PPi, while under higher glutamine levels, GlnD hydrolyzes PII-UMP to PII and UMP (deuridylylation). Thus, controls uridylylation state and activity of the PII proteins, and plays an important role in the regulation of nitrogen assimilation and metabolism. The protein is Bifunctional uridylyltransferase/uridylyl-removing enzyme of Ruegeria pomeroyi (strain ATCC 700808 / DSM 15171 / DSS-3) (Silicibacter pomeroyi).